A 182-amino-acid chain; its full sequence is NADH-quinone oxidoreductase subunit I (182 aa).

4Fe-4S ferredoxin-type domains follow at residues 52-82 (LTRDPDGEERCVACNLCAVACPVGCISLQKA) and 92-121 (DFFRINFSRCIFCGLCEEACPTTAIQLTPD). Cys62, Cys65, Cys68, Cys72, Cys101, Cys104, Cys107, and Cys111 together coordinate [4Fe-4S] cluster.

Belongs to the complex I 23 kDa subunit family. As to quaternary structure, NDH-1 is composed of 13 different subunits. Subunits NuoA, H, J, K, L, M, N constitute the membrane sector of the complex. The cofactor is [4Fe-4S] cluster.

Its subcellular location is the cell inner membrane. It carries out the reaction a quinone + NADH + 5 H(+)(in) = a quinol + NAD(+) + 4 H(+)(out). Its function is as follows. NDH-1 shuttles electrons from NADH, via FMN and iron-sulfur (Fe-S) centers, to quinones in the respiratory chain. The immediate electron acceptor for the enzyme in this species is believed to be ubiquinone. Couples the redox reaction to proton translocation (for every two electrons transferred, four hydrogen ions are translocated across the cytoplasmic membrane), and thus conserves the redox energy in a proton gradient. The sequence is that of NADH-quinone oxidoreductase subunit I from Pseudomonas syringae pv. tomato (strain ATCC BAA-871 / DC3000).